The chain runs to 158 residues: NAD(P)H-quinone oxidoreductase subunit J, chloroplastic (158 aa).

Belongs to the complex I 30 kDa subunit family. NDH is composed of at least 16 different subunits, 5 of which are encoded in the nucleus.

It localises to the plastid. It is found in the chloroplast thylakoid membrane. It catalyses the reaction a plastoquinone + NADH + (n+1) H(+)(in) = a plastoquinol + NAD(+) + n H(+)(out). The catalysed reaction is a plastoquinone + NADPH + (n+1) H(+)(in) = a plastoquinol + NADP(+) + n H(+)(out). Functionally, NDH shuttles electrons from NAD(P)H:plastoquinone, via FMN and iron-sulfur (Fe-S) centers, to quinones in the photosynthetic chain and possibly in a chloroplast respiratory chain. The immediate electron acceptor for the enzyme in this species is believed to be plastoquinone. Couples the redox reaction to proton translocation, and thus conserves the redox energy in a proton gradient. The polypeptide is NAD(P)H-quinone oxidoreductase subunit J, chloroplastic (Cicer arietinum (Chickpea)).